The sequence spans 321 residues: MTQNTPFPIFPHRHLLGIKGLTLQDLTTLLDRADANVTLYQKNDKKKSILHGRTQINLFFESSTRTQSSFELAGKRLGADVMNMIISNSSVKKGETLIDTATTLNAMNPDILVIRHNCAGAASLLAQKIDCCVINAGDGAHEHPTQALLDALTIRRTKGRIEGLTVAICGDILHSRVARSNIISLNTLGARVRVVAPSTLLPTGIEDMGVEVFHTMQEGLKGADVVMMLRLQLERMTGAFIPSIREYFYHFGLHKENLIYAKNDCIIMHPGPINRGVEIASDIADGTRSMIHTQVEMGIAVRMAIMEALLDPRHDYNGEKK.

Arg-65 and Thr-66 together coordinate carbamoyl phosphate. Residue Lys-93 coordinates L-aspartate. Carbamoyl phosphate is bound by residues Arg-115, His-143, and Gln-146. L-aspartate-binding residues include Arg-176 and Arg-230. Carbamoyl phosphate contacts are provided by Gly-271 and Pro-272.

It belongs to the aspartate/ornithine carbamoyltransferase superfamily. ATCase family. Heterododecamer (2C3:3R2) of six catalytic PyrB chains organized as two trimers (C3), and six regulatory PyrI chains organized as three dimers (R2).

It carries out the reaction carbamoyl phosphate + L-aspartate = N-carbamoyl-L-aspartate + phosphate + H(+). It participates in pyrimidine metabolism; UMP biosynthesis via de novo pathway; (S)-dihydroorotate from bicarbonate: step 2/3. Functionally, catalyzes the condensation of carbamoyl phosphate and aspartate to form carbamoyl aspartate and inorganic phosphate, the committed step in the de novo pyrimidine nucleotide biosynthesis pathway. This is Aspartate carbamoyltransferase catalytic subunit from Bartonella bacilliformis (strain ATCC 35685 / KC583 / Herrer 020/F12,63).